Here is a 113-residue protein sequence, read N- to C-terminus: Class I hydrophobin POH3 (113 aa).

Positions 1-21 (MFSRVIFCTFLILPLLAAATA) are cleaved as a signal peptide. Intrachain disulfides connect Cys-32/Cys-92, Cys-39/Cys-86, Cys-40/Cys-73, and Cys-93/Cys-106. N-linked (GlcNAc...) asparagine glycosylation is present at Asn-110.

This sequence belongs to the fungal hydrophobin family. As to quaternary structure, self-assembles to form functional amyloid fibrils called rodlets. Self-assembly into fibrillar rodlets occurs spontaneously at hydrophobic:hydrophilic interfaces and the rodlets further associate laterally to form amphipathic monolayers. Expressionn is switched off in the fruiting bodies but abundantly expressed in the vegetative mycelium of both monokaryon and dikaryon.

It localises to the secreted. Its subcellular location is the cell wall. In terms of biological role, aerial growth, conidiation, and dispersal of filamentous fungi in the environment rely upon a capability of their secreting small amphipathic proteins called hydrophobins (HPBs) with low sequence identity. Class I can self-assemble into an outermost layer of rodlet bundles on aerial cell surfaces, conferring cellular hydrophobicity that supports fungal growth, development and dispersal; whereas Class II form highly ordered films at water-air interfaces through intermolecular interactions but contribute nothing to the rodlet structure. POH3 is a class I hydrophobin that causes a large drop in the water-surface tension, enabling hyphae to breach the interface and grow into the air, in both the primary and the secondary mycelium. In the latter mycelium POH3 maight also play a role in the emergence of fruiting bodies. Secreted POH3 could also play a role in facilitating lignin degradation. The chain is Class I hydrophobin POH3 from Pleurotus ostreatus (Oyster mushroom).